Consider the following 102-residue polypeptide: Large ribosomal subunit protein bL21 (102 aa).

This sequence belongs to the bacterial ribosomal protein bL21 family. As to quaternary structure, part of the 50S ribosomal subunit. Contacts protein L20.

In terms of biological role, this protein binds to 23S rRNA in the presence of protein L20. In Campylobacter jejuni subsp. jejuni serotype O:6 (strain 81116 / NCTC 11828), this protein is Large ribosomal subunit protein bL21.